The primary structure comprises 123 residues: Large ribosomal subunit protein uL18 (123 aa).

The protein belongs to the universal ribosomal protein uL18 family. As to quaternary structure, part of the 50S ribosomal subunit; part of the 5S rRNA/L5/L18/L25 subcomplex. Contacts the 5S and 23S rRNAs.

This is one of the proteins that bind and probably mediate the attachment of the 5S RNA into the large ribosomal subunit, where it forms part of the central protuberance. This is Large ribosomal subunit protein uL18 from Bifidobacterium longum (strain DJO10A).